Consider the following 137-residue polypeptide: MTHDSLSPVAAPAVHSGDALARLAAVIESRKPANGGDADKSYVARLLHKGPDAFLKKIGEEATEVVMAAKDVDHGADASKLVYEVADLWFHSMIALAHYGLAPADVVAELERREGTSGIEEKALRKSLQRAAEEAQP.

The segment covering 114 to 124 (EGTSGIEEKAL) has biased composition (basic and acidic residues). Positions 114 to 137 (EGTSGIEEKALRKSLQRAAEEAQP) are disordered.

It belongs to the PRA-PH family.

It localises to the cytoplasm. The enzyme catalyses 1-(5-phospho-beta-D-ribosyl)-ATP + H2O = 1-(5-phospho-beta-D-ribosyl)-5'-AMP + diphosphate + H(+). It functions in the pathway amino-acid biosynthesis; L-histidine biosynthesis; L-histidine from 5-phospho-alpha-D-ribose 1-diphosphate: step 2/9. In Paracidovorax citrulli (strain AAC00-1) (Acidovorax citrulli), this protein is Phosphoribosyl-ATP pyrophosphatase.